The chain runs to 156 residues: Cytochrome c-type biogenesis protein CcmE 2 (156 aa).

Residues 1 to 8 are Cytoplasmic-facing; that stretch reads MNPQRRRR. A helical; Signal-anchor for type II membrane protein transmembrane segment spans residues 9 to 29; that stretch reads LWWVLALLLAGGLATTLVSMA. The Periplasmic segment spans residues 30 to 156; sequence LQRNVAYLYT…AAANQGGALR (127 aa). Positions 123 and 127 each coordinate heme. The tract at residues 135 to 156 is disordered; it reads KMGSAHRKHDVPAAANQGGALR.

Belongs to the CcmE/CycJ family.

The protein localises to the cell inner membrane. Heme chaperone required for the biogenesis of c-type cytochromes. Transiently binds heme delivered by CcmC and transfers the heme to apo-cytochromes in a process facilitated by CcmF and CcmH. The protein is Cytochrome c-type biogenesis protein CcmE 2 of Xanthomonas oryzae pv. oryzae (strain MAFF 311018).